Consider the following 346-residue polypeptide: 3 beta-hydroxysteroid dehydrogenase/Delta 5--&gt;4-isomerase (346 aa).

Y147 acts as the Proton acceptor in catalysis. K151 provides a ligand contact to NAD(+).

Belongs to the 3-beta-HSD family.

It carries out the reaction a 3beta-hydroxy-Delta(5)-steroid + NAD(+) = a 3-oxo-Delta(5)-steroid + NADH + H(+). The catalysed reaction is a 3-oxo-Delta(5)-steroid = a 3-oxo-Delta(4)-steroid. It participates in lipid metabolism; steroid biosynthesis. In terms of biological role, catalyzes the oxidative conversion of Delta(5)-ene-3-beta-hydroxy steroid, and the oxidative conversion of ketosteroids. The 3-beta-HSD enzymatic system plays a crucial role in the biosynthesis of all classes of hormonal steroids. During viral infection, steroid production contributes to virulence by inhibiting the host inflammatory response. In Monkeypox virus, this protein is 3 beta-hydroxysteroid dehydrogenase/Delta 5--&gt;4-isomerase (OPG174).